The primary structure comprises 328 residues: Probable voltage-gated potassium channel subunit beta (328 aa).

NADP(+) contacts are provided by Trp-21, Gln-27, and Asp-49. The active-site Proton donor/acceptor is Tyr-54. 14 residues coordinate NADP(+): Ser-152, Gln-178, Trp-207, Ser-208, Pro-209, Leu-210, Ala-211, Lys-218, Arg-229, Gly-285, Thr-287, Gln-291, Glu-294, and Asn-295.

This sequence belongs to the shaker potassium channel beta subunit family. Forms heteromultimeric complexes with potassium channel alpha subunits. As to expression, expressed in late-developed leaves with the highest expression in the flag leaf (at protein level).

In terms of biological role, probable accessory potassium channel protein which modulates the activity of the pore-forming alpha subunit. The polypeptide is Probable voltage-gated potassium channel subunit beta (KOB1) (Oryza sativa subsp. japonica (Rice)).